The chain runs to 911 residues: Inositol 1,4,5-triphosphate receptor associated 1 (911 aa).

Over residues 1–11 the composition is skewed to basic and acidic residues; sequence MVKAPQSEERL. 4 disordered regions span residues 1-21, 39-122, 174-405, and 478-498; these read MVKAPQSEERLAGGGKGNNSV, EVPG…HRHL, LTRR…GPRL, and EQEKGHPSELSSAIEEEESKG. A compositionally biased stretch (polar residues) spans 68-86; sequence AAQSPAGQDPATTGISCSP. Positions 111-122 are enriched in basic residues; the sequence is HSPHRRLSHRHL. Position 118 is a phosphoserine (Ser-118). The interaction with PRKG1 stretch occupies residues 152-184; the sequence is SEEDKKKNLALLEEAKLVSERFLTRRGRKSRSS. Positions 183 to 212 are enriched in polar residues; it reads SSPGESSPAVSPNLSPGASPASSQSNSLTV. Residues 277-292 are compositionally biased toward basic and acidic residues; the sequence is TVEKSKEITIEQKENF. A Phosphoserine modification is found at Ser-393. The interval 534 to 580 is interaction with ITPR1; the sequence is NVFVQLSLAFRNDSYTLESRINQAERERNLTEENTEKELENFKASIT. The stretch at 547–645 forms a coiled coil; that stretch reads SYTLESRINQ…MQYVENLKRT (99 aa). Phosphoserine is present on residues Ser-683 and Ser-696. 2 disordered regions span residues 706–766 and 787–829; these read LNLP…TPSC and YQEG…KEQR. Positions 708–728 are enriched in low complexity; it reads LPGQSPSSSPIPSLPALSESS. The span at 790 to 801 shows a compositional bias: basic and acidic residues; the sequence is GLKKTKELQGLR. A compositionally biased stretch (acidic residues) spans 802 to 825; sequence EEEEEQKSESPEEPEEVAETEEEE. Residues 853–873 traverse the membrane as a helical segment; that stretch reads VIWMMAAAMLVLTVVLGLYGS.

In terms of assembly, interacts with PRKG1/cGKI-beta and ITPR1/IP3R type I. Part of cGMP kinase signaling complex at least composed of ACTA2/alpha-actin, CNN1/calponin H1, PLN/phospholamban, PRKG1 and ITPR1. Interacts with HCN4; regulates HCN4 channel activity. In terms of processing, phosphorylated by PRKG1/cGKI-beta. Phosphorylation at Ser-696 is necessary for PRKG1-induced calcium release in the cytosol. In terms of tissue distribution, highly expressed in trachea, aorta and uterus.

The protein resides in the sarcoplasmic reticulum. It is found in the cytoplasm. The protein localises to the perinuclear region. Its subcellular location is the membrane. Its function is as follows. Plays a role as NO/PRKG1-dependent regulator of IP3-induced calcium release; its phosphorylation by PRKG1 inhibits bradykinin and IP3-induced calcium release from intracellular stores. Recruits PRKG1 to the endoplasmic reticulum and may mediate the assembly of PRKG1 and ITPR1 in a macrocomplex. Involved in PRKG1 signaling cascade leading to inhibition of platelet activation and aggregation. Also mediates NO-dependent inhibition of calcium signaling in gastrointestinal smooth muscle contributing to NO-dependent relaxation. Plays a role in the regulation of cellular excitability by regulating the hyperpolarization-activated cyclic nucleotide-gated HCN4 channel activity. The polypeptide is Inositol 1,4,5-triphosphate receptor associated 1 (IRAG1) (Bos taurus (Bovine)).